We begin with the raw amino-acid sequence, 359 residues long: Probable C-C chemokine receptor type 3 (359 aa).

Residues 1–38 (MAFNTDEIKTVVESFETTPYEYEWAPPCEKVRIKELGS) are Extracellular-facing. A helical transmembrane segment spans residues 39–64 (WLLPPLYSLVFIIGLLGNMMVVLILI). Topologically, residues 65-68 (KYRK) are cytoplasmic. A helical membrane pass occupies residues 69–95 (LQIMTNIYLFNLAISDLLFLFTVPFWI). Topologically, residues 96-111 (HYVLWNEWGFGHYMCK) are extracellular. Cys110 and Cys187 are disulfide-bonded. Residues 112-133 (MLSGFYYLALYSEIFFIILLTI) traverse the membrane as a helical segment. The Cytoplasmic segment spans residues 134 to 150 (DRYLAIVHAVFALRART). Residues 151–175 (VTFATITSIITWGLAGLAALPEFIF) form a helical membrane-spanning segment. Residues 176 to 201 (HESQDSFGEFSCSPRYPEGEEDSWKR) are Extracellular-facing. The chain crosses the membrane as a helical span at residues 202-227 (FHALRMNIFGLALPLLIMVICYSGII). At 228–243 (KTLLRCPNKKKHKAIR) the chain is on the cytoplasmic side. The helical transmembrane segment at 244 to 268 (LIFVVMIVFFIFWTPYNLVLLFSAF) threads the bilayer. The Extracellular portion of the chain corresponds to 269 to 285 (HSTFLETSCQQSKHLDL). Residues 286–309 (AMQVTEVIAYTHCCINPVIYAFVG) traverse the membrane as a helical segment. Topologically, residues 310–359 (ERFRKHLRLFFHRNVAVYLGKYIPFLPGEKMERTSSVSPSTGEQEISVVF) are cytoplasmic.

Belongs to the G-protein coupled receptor 1 family. Detected in skeletal muscle and in trace amounts in leukocytes.

The protein resides in the cell membrane. Receptor for C-C type chemokine. Binds and responds to a variety of chemokines, including CCL11, CCL26, CCL7, CCL13, RANTES(CCL5) and CCL15. Subsequently transduces a signal by increasing the intracellular calcium ions level. In addition acts as a possible functional receptor for NARS1. In Mus musculus (Mouse), this protein is Probable C-C chemokine receptor type 3 (Ccr3).